The sequence spans 552 residues: Phosphoglucomutase (552 aa).

Catalysis depends on Ser-135, which acts as the Phosphoserine intermediate. Mg(2+) contacts are provided by Ser-135, Asp-289, Asp-291, and Asp-293.

It belongs to the phosphohexose mutase family. The cofactor is Mg(2+).

It carries out the reaction alpha-D-glucose 1-phosphate = alpha-D-glucose 6-phosphate. It participates in glycolipid metabolism; diglucosyl-diacylglycerol biosynthesis. In terms of biological role, catalyzes the interconversion between glucose-6-phosphate and alpha-glucose-1-phosphate. This is the first step in the biosynthesis of diglucosyl-diacylglycerol (Glc2-DAG), i.e. a glycolipid found in the membrane, which is also used as a membrane anchor for lipoteichoic acid (LTA). The polypeptide is Phosphoglucomutase (pgcA) (Staphylococcus saprophyticus subsp. saprophyticus (strain ATCC 15305 / DSM 20229 / NCIMB 8711 / NCTC 7292 / S-41)).